A 205-amino-acid polypeptide reads, in one-letter code: Meiotic nuclear division protein 1 homolog (205 aa).

Positions 79–147 (LHARKRKLET…CADLEKYKEC (69 aa)) form a coiled coil.

This sequence belongs to the MND1 family.

The protein localises to the nucleus. In terms of biological role, required for proper homologous chromosome pairing and efficient cross-over and intragenic recombination during meiosis. Stimulates both dmc1- and rad51-mediated homologous strand assimilation, which is required for the resolution of meiotic double-strand breaks. In Xenopus laevis (African clawed frog), this protein is Meiotic nuclear division protein 1 homolog.